The following is a 34-amino-acid chain: MSDIN-like toxin proprotein 5 (34 aa).

A propeptide spanning residues 1 to 10 (MSDINTARLP) is cleaved from the precursor. The segment at residues 11–20 (YVVFMSFIPP) is a cross-link (cyclopeptide (Tyr-Pro)). Residues 21–34 (CVNDDIQVVLTRGE) constitute a propeptide that is removed on maturation.

This sequence belongs to the MSDIN fungal toxin family. Post-translationally, processed by the macrocyclase-peptidase enzyme POPB to yield a toxic cyclic decapeptide. POPB first removes 10 residues from the N-terminus. Conformational trapping of the remaining peptide forces the enzyme to release this intermediate rather than proceed to macrocyclization. The enzyme rebinds the remaining peptide in a different conformation and catalyzes macrocyclization of the N-terminal 10 residues.

Functionally, probable toxin that belongs to the MSDIN-like toxin family responsible for a large number of food poisoning cases and deaths. This chain is MSDIN-like toxin proprotein 5, found in Amanita bisporigera (Destroying angel).